Consider the following 385-residue polypeptide: S-adenosylmethionine synthase (385 aa).

His-15 contacts ATP. Residue Asp-17 coordinates Mg(2+). Glu-43 provides a ligand contact to K(+). Positions 56 and 99 each coordinate L-methionine. A flexible loop region spans residues 99–109; sequence QSVDIAQGVDR. ATP-binding positions include 164–166, 230–231, Asp-239, 245–246, and Lys-266; these read DAK, RF, and RK. L-methionine is bound at residue Asp-239. Lys-270 lines the L-methionine pocket.

This sequence belongs to the AdoMet synthase family. Homotetramer; dimer of dimers. Mg(2+) serves as cofactor. Requires K(+) as cofactor.

The protein resides in the cytoplasm. The enzyme catalyses L-methionine + ATP + H2O = S-adenosyl-L-methionine + phosphate + diphosphate. It participates in amino-acid biosynthesis; S-adenosyl-L-methionine biosynthesis; S-adenosyl-L-methionine from L-methionine: step 1/1. Catalyzes the formation of S-adenosylmethionine (AdoMet) from methionine and ATP. The overall synthetic reaction is composed of two sequential steps, AdoMet formation and the subsequent tripolyphosphate hydrolysis which occurs prior to release of AdoMet from the enzyme. This Alkalilimnicola ehrlichii (strain ATCC BAA-1101 / DSM 17681 / MLHE-1) protein is S-adenosylmethionine synthase.